Here is a 98-residue protein sequence, read N- to C-terminus: NADH-ubiquinone oxidoreductase chain 4L (98 aa).

3 consecutive transmembrane segments (helical) span residues 1-21 (MSLAHINIFLAFTVSLVGLLM), 25-45 (HLMSSLLCLEGMMLSLFVMAT), and 59-81 (MPIILLVFAACERALGLSLLVMV).

This sequence belongs to the complex I subunit 4L family. In terms of assembly, core subunit of respiratory chain NADH dehydrogenase (Complex I) which is composed of 45 different subunits.

The protein localises to the mitochondrion inner membrane. It catalyses the reaction a ubiquinone + NADH + 5 H(+)(in) = a ubiquinol + NAD(+) + 4 H(+)(out). Core subunit of the mitochondrial membrane respiratory chain NADH dehydrogenase (Complex I) which catalyzes electron transfer from NADH through the respiratory chain, using ubiquinone as an electron acceptor. Part of the enzyme membrane arm which is embedded in the lipid bilayer and involved in proton translocation. In Equus asinus (Donkey), this protein is NADH-ubiquinone oxidoreductase chain 4L (MT-ND4L).